The following is a 1213-amino-acid chain: DNA-directed RNA polymerase subunit beta' (1213 aa).

Residues Cys60, Cys62, Cys75, and Cys78 each coordinate Zn(2+). Asp450, Asp452, and Asp454 together coordinate Mg(2+). Zn(2+) contacts are provided by Cys819, Cys893, Cys900, and Cys903.

The protein belongs to the RNA polymerase beta' chain family. The RNAP catalytic core consists of 2 alpha, 1 beta, 1 beta' and 1 omega subunit. When a sigma factor is associated with the core the holoenzyme is formed, which can initiate transcription. Mg(2+) serves as cofactor. Requires Zn(2+) as cofactor.

The enzyme catalyses RNA(n) + a ribonucleoside 5'-triphosphate = RNA(n+1) + diphosphate. Functionally, DNA-dependent RNA polymerase catalyzes the transcription of DNA into RNA using the four ribonucleoside triphosphates as substrates. This Streptococcus pyogenes serotype M4 (strain MGAS10750) protein is DNA-directed RNA polymerase subunit beta'.